Reading from the N-terminus, the 394-residue chain is 8-amino-7-oxononanoate synthase (394 aa).

Arg21 contacts substrate. 112–113 lines the pyridoxal 5'-phosphate pocket; sequence GY. His137 provides a ligand contact to substrate. Positions 183, 211, and 239 each coordinate pyridoxal 5'-phosphate. Position 242 is an N6-(pyridoxal phosphate)lysine (Lys242). Thr358 lines the substrate pocket.

It belongs to the class-II pyridoxal-phosphate-dependent aminotransferase family. BioF subfamily. Homodimer. Pyridoxal 5'-phosphate serves as cofactor.

It carries out the reaction 6-carboxyhexanoyl-[ACP] + L-alanine + H(+) = (8S)-8-amino-7-oxononanoate + holo-[ACP] + CO2. The protein operates within cofactor biosynthesis; biotin biosynthesis. Catalyzes the decarboxylative condensation of pimeloyl-[acyl-carrier protein] and L-alanine to produce 8-amino-7-oxononanoate (AON), [acyl-carrier protein], and carbon dioxide. This Burkholderia cenocepacia (strain ATCC BAA-245 / DSM 16553 / LMG 16656 / NCTC 13227 / J2315 / CF5610) (Burkholderia cepacia (strain J2315)) protein is 8-amino-7-oxononanoate synthase.